Here is a 1001-residue protein sequence, read N- to C-terminus: E3 ubiquitin-protein ligase BRE1B (1001 aa).

The interval 1-40 (MSGLSNKRAAGDGGSGPPEKKMNREEKTTTTLIEPIRLGG) is disordered. The segment covering 18–28 (PEKKMNREEKT) has biased composition (basic and acidic residues). N6-acetyllysine is present on Lys20. Residue Ser42 is modified to Phosphoserine. Residues 55–91 (KNKKLAERLEQRQACEDELRERIEKLEKRQATDDATL) adopt a coiled-coil conformation. The segment at 122–142 (TEVPGCQEGLTRDVIPRPDPG) is disordered. Coiled coils occupy residues 189 to 377 (KAAV…LRSL) and 437 to 525 (LQKK…ASGS). N6-acetyllysine occurs at positions 355 and 517. Residues 519–647 (RAQASGSSHC…KAKVEEAKRK (129 aa)) form a disordered region. Residues 565 to 576 (ALLAGATSATSS) are compositionally biased toward low complexity. Residues Lys578 and Lys579 each participate in a glycyl lysine isopeptide (Lys-Gly) (interchain with G-Cter in SUMO2) cross-link. 2 positions are modified to phosphoserine: Ser584 and Ser585. 2 stretches are compositionally biased toward basic and acidic residues: residues 602-619 (RGRE…EREG) and 633-647 (RADR…AKRK). Positions 627–946 (AASTLSRADR…EEIKEYKARL (320 aa)) form a coiled coil. Residues 948-987 (CPCCNTRKKDAVLTKCFHVFCFECVRGRYEARQRKCPKCN) form an RING-type zinc finger.

It belongs to the BRE1 family. In terms of assembly, component of the RNF20/40 complex (also known as BRE1 complex) probably composed of 2 copies of RNF20/BRE1A and 2 copies of RNF40/BRE1B. Interacts with UBE2E1/UBCH6. Interacts with RB1 and WAC.

It localises to the nucleus. The catalysed reaction is S-ubiquitinyl-[E2 ubiquitin-conjugating enzyme]-L-cysteine + [acceptor protein]-L-lysine = [E2 ubiquitin-conjugating enzyme]-L-cysteine + N(6)-ubiquitinyl-[acceptor protein]-L-lysine.. It participates in protein modification; protein ubiquitination. Component of the RNF20/40 E3 ubiquitin-protein ligase complex that mediates monoubiquitination of 'Lys-120' of histone H2B (H2BK120ub1). H2BK120ub1 gives a specific tag for epigenetic transcriptional activation and is also prerequisite for histone H3 'Lys-4' and 'Lys-79' methylation (H3K4me and H3K79me, respectively). It thereby plays a central role in histone code and gene regulation. The RNF20/40 complex forms a H2B ubiquitin ligase complex in cooperation with the E2 enzyme UBE2A or UBE2B; reports about the cooperation with UBE2E1/UBCH are contradictory. Required for transcriptional activation of Hox genes. This chain is E3 ubiquitin-protein ligase BRE1B (Rnf40), found in Mus musculus (Mouse).